The primary structure comprises 607 residues: Potassium transporter KimA (607 aa).

At 1-30 (MYHSIKRFLIGKPLKSQAAGEQKLTKLKAL) the chain is on the cytoplasmic side. The chain crosses the membrane as a helical span at residues 31–49 (AMLSSDALSSVAYGTEQIL). 2 residues coordinate K(+): Asp-36 and Tyr-43. Topologically, residues 50 to 62 (IILATISAAAFWY) are extracellular. A helical transmembrane segment spans residues 63-84 (SIPIAVGVLILLLALILSYRQI). Over 85 to 105 (IYAYPQGGGAYIVSKENLGEK) the chain is Cytoplasmic. The helical transmembrane segment at 106 to 134 (PGLIAGGSLLVDYILTVAVSISAGTDAIT) threads the bilayer. K(+) is bound by residues Asp-117 and Ser-125. The Extracellular portion of the chain corresponds to 135–142 (SAFPALHD). The chain crosses the membrane as a helical span at residues 143 to 162 (YHVPIAIFLVLVIMILNLRG). The Cytoplasmic segment spans residues 163–166 (LSES). The helical transmembrane segment at 167 to 190 (ASILAYPVYLFVVALLVLIAVGLF) threads the bilayer. At 191–214 (KLMTGQIDQPAHHTSLGTPVAGIT) the chain is on the extracellular side. A helical membrane pass occupies residues 215-238 (LFLLLKAFSSGCSALTGVEAISNA). The Cytoplasmic portion of the chain corresponds to 239 to 249 (IPAFKNPPARN). A helical transmembrane segment spans residues 250 to 271 (AARTLAMMGILLAILFSGITVL). The Extracellular segment spans residues 272 to 298 (AYGYGTAPKPDETVVSQIASETFGRNV). Residues 299-323 (FYYVIQGVTSLILVLAANTGFSAFP) traverse the membrane as a helical segment. The Cytoplasmic portion of the chain corresponds to 324-347 (QLAFNLARDQYMPRMFTVRGDRLG). A helical transmembrane segment spans residues 348-366 (FSNGIIFLGFASIVLIILF). Topologically, residues 367–372 (GGQTEH) are extracellular. The chain crosses the membrane as a helical span at residues 373-393 (LIPLYAVGVFIPFTLSQTGMC). The Cytoplasmic segment spans residues 394–405 (MKWIKQKPKGWI). A helical membrane pass occupies residues 406 to 428 (GKMLINSCGALISFMVLSILFVT). Residues 429-431 (KFN) lie on the Extracellular side of the membrane. Residues 432-447 (VVWPVLIFMPIVVLLF) traverse the membrane as a helical segment. The Cytoplasmic portion of the chain corresponds to 448–607 (FAIKNHYTAV…VATLPYHFKK (160 aa)).

This sequence belongs to the amino acid-polyamine-organocation (APC) superfamily. As to quaternary structure, homodimer.

The protein resides in the cell membrane. It catalyses the reaction K(+)(in) + H(+)(in) = K(+)(out) + H(+)(out). Potassium uptake increases at lower external pH and is abolished by the proton ionophore carbonyl cyanide m-chlorophenylhydrazone (CCCP). Binds cyclic di-AMP (c-di-AMP), which inhibits the potassium transport activity. Functionally, high-affinity potassium transporter. Functions as a K(+)/H(+) symporter. The polypeptide is Potassium transporter KimA (Bacillus subtilis (strain 168)).